Here is a 300-residue protein sequence, read N- to C-terminus: Recombination-promoting nuclease RpnC (300 aa).

The protein belongs to the Rpn/YhgA-like nuclease family.

A low activity DNA endonuclease yielding 3'-hydroxyl ends. Upon expression enhances RecA-independent DNA recombination 2.9-fold, concomitantly reducing viability by 59% and inducing DNA damage as measured by induction of the SOS repair response. The chain is Recombination-promoting nuclease RpnC from Escherichia coli (strain K12).